The following is a 533-amino-acid chain: Probable dolichyl pyrophosphate Man9GlcNAc2 alpha-1,3-glucosyltransferase (533 aa).

The disordered stretch occupies residues 1-20 (MPKKKPAKHSGEDDITIPVS). Helical transmembrane passes span 42–64 (FLCISLFALLIRSAVTMYPYSGA), 149–169 (WTVLSSDAFIFFPAALFFVLV), 184–204 (WHIAMILLNPCLILIDHGHFQ), 214–234 (VGAIAAVLCESEVLTCVLFSL), 264–284 (ILSVIKLGIAVIVTFVIFWWP), 360–380 (GFLYGLLNSSMAFYLFSFQVH), 422–442 (LLIPYLTLSFLFTVIYHSPGN), 463–483 (VFLLRTHFFISVVLHVLYLTI), and 491–511 (FLFEALIMILCFSYFIMFAFY).

It belongs to the ALG6/ALG8 glucosyltransferase family.

Its subcellular location is the endoplasmic reticulum membrane. The catalysed reaction is an alpha-D-Man-(1-&gt;2)-alpha-D-Man-(1-&gt;2)-alpha-D-Man-(1-&gt;3)-[alpha-D-Man-(1-&gt;2)-alpha-D-Man-(1-&gt;3)-[alpha-D-Man-(1-&gt;2)-alpha-D-Man-(1-&gt;6)]-alpha-D-Man-(1-&gt;6)]-beta-D-Man-(1-&gt;4)-beta-D-GlcNAc-(1-&gt;4)-alpha-D-GlcNAc-diphospho-di-trans,poly-cis-dolichol + a di-trans,poly-cis-dolichyl beta-D-glucosyl phosphate = an alpha-D-Glc-(1-&gt;3)-alpha-D-Man-(1-&gt;2)-alpha-D-Man-(1-&gt;2)-alpha-D-Man-(1-&gt;3)-[alpha-D-Man-(1-&gt;2)-alpha-D-Man-(1-&gt;3)-[alpha-D-Man-(1-&gt;2)-alpha-D-Man-(1-&gt;6)]-alpha-D-Man-(1-&gt;6)]-beta-D-Man-(1-&gt;4)-beta-D-GlcNAc-(1-&gt;4)-alpha-D-GlcNAc-diphospho-di-trans,poly-cis-dolichol + a di-trans,poly-cis-dolichyl phosphate + H(+). It participates in protein modification; protein glycosylation. Functionally, adds the first glucose residue to the lipid-linked oligosaccharide precursor for N-linked glycosylation. Transfers glucose from dolichyl phosphate glucose (Dol-P-Glc) onto the lipid-linked oligosaccharide Man(9)GlcNAc(2)-PP-Dol. This is Probable dolichyl pyrophosphate Man9GlcNAc2 alpha-1,3-glucosyltransferase from Arabidopsis thaliana (Mouse-ear cress).